A 211-amino-acid chain; its full sequence is Large ribosomal subunit protein uL3 (211 aa).

Positions 126 to 147 (HGQSRGPMAHGSRYHRRPGSMG) are disordered.

The protein belongs to the universal ribosomal protein uL3 family. In terms of assembly, part of the 50S ribosomal subunit. Forms a cluster with proteins L14 and L19.

Functionally, one of the primary rRNA binding proteins, it binds directly near the 3'-end of the 23S rRNA, where it nucleates assembly of the 50S subunit. This is Large ribosomal subunit protein uL3 from Geobacillus thermodenitrificans (strain NG80-2).